The primary structure comprises 101 residues: Small ribosomal subunit protein uS14A (101 aa).

The protein belongs to the universal ribosomal protein uS14 family. In terms of assembly, part of the 30S ribosomal subunit. Contacts proteins S3 and S10.

Its function is as follows. Binds 16S rRNA, required for the assembly of 30S particles and may also be responsible for determining the conformation of the 16S rRNA at the A site. The protein is Small ribosomal subunit protein uS14A of Mycolicibacterium smegmatis (strain ATCC 700084 / mc(2)155) (Mycobacterium smegmatis).